Here is a 407-residue protein sequence, read N- to C-terminus: Na(+)-translocating NADH-quinone reductase subunit F (407 aa).

Residues 3–23 traverse the membrane as a helical segment; it reads IILGVVMFTLIVLALTVMILF. The 2Fe-2S ferredoxin-type domain occupies 32 to 126; sequence GDITVEINED…NLKIELPEEI (95 aa). Residues Cys-69, Cys-75, Cys-78, and Cys-110 each coordinate [2Fe-2S] cluster. In terms of domain architecture, FAD-binding FR-type spans 129–269; it reads VKKWTCEVIS…SGPFGEFFAK (141 aa).

Belongs to the NqrF family. Composed of six subunits; NqrA, NqrB, NqrC, NqrD, NqrE and NqrF. It depends on [2Fe-2S] cluster as a cofactor. The cofactor is FAD.

It localises to the cell inner membrane. It carries out the reaction a ubiquinone + n Na(+)(in) + NADH + H(+) = a ubiquinol + n Na(+)(out) + NAD(+). Its function is as follows. NQR complex catalyzes the reduction of ubiquinone-1 to ubiquinol by two successive reactions, coupled with the transport of Na(+) ions from the cytoplasm to the periplasm. The first step is catalyzed by NqrF, which accepts electrons from NADH and reduces ubiquinone-1 to ubisemiquinone by a one-electron transfer pathway. In Yersinia pseudotuberculosis serotype O:1b (strain IP 31758), this protein is Na(+)-translocating NADH-quinone reductase subunit F.